The following is a 558-amino-acid chain: Formate--tetrahydrofolate ligase (558 aa).

An ATP-binding site is contributed by 67–74 (TPAGEGKT).

It belongs to the formate--tetrahydrofolate ligase family.

The catalysed reaction is (6S)-5,6,7,8-tetrahydrofolate + formate + ATP = (6R)-10-formyltetrahydrofolate + ADP + phosphate. It functions in the pathway one-carbon metabolism; tetrahydrofolate interconversion. This chain is Formate--tetrahydrofolate ligase, found in Sphingobium sp. (strain NBRC 103272 / SYK-6).